The following is a 1485-amino-acid chain: Chromosome partition protein MukB (1485 aa).

Gly-34 to Ser-41 is an ATP binding site. Coiled coils occupy residues Glu-311–Arg-480 and Gly-519–Gln-665. Positions Pro-666–Arg-783 are flexible hinge. Coiled coils occupy residues Asn-832–Ala-1115 and Ile-1209–Val-1265.

The protein belongs to the SMC family. MukB subfamily. In terms of assembly, homodimerization via its hinge domain. Binds to DNA via its C-terminal region. Interacts, and probably forms a ternary complex, with MukE and MukF via its C-terminal region. The complex formation is stimulated by calcium or magnesium. Interacts with tubulin-related protein FtsZ.

The protein localises to the cytoplasm. Its subcellular location is the nucleoid. Functionally, plays a central role in chromosome condensation, segregation and cell cycle progression. Functions as a homodimer, which is essential for chromosome partition. Involved in negative DNA supercoiling in vivo, and by this means organize and compact chromosomes. May achieve or facilitate chromosome segregation by condensation DNA from both sides of a centrally located replisome during cell division. This Edwardsiella ictaluri (strain 93-146) protein is Chromosome partition protein MukB.